The sequence spans 79 residues: Sulfur carrier protein TusA (79 aa).

Cys17 (cysteine persulfide intermediate) is an active-site residue.

The protein belongs to the sulfur carrier protein TusA family.

The protein localises to the cytoplasm. Sulfur carrier protein which probably makes part of a sulfur-relay system. This Actinobacillus succinogenes (strain ATCC 55618 / DSM 22257 / CCUG 43843 / 130Z) protein is Sulfur carrier protein TusA.